A 139-amino-acid chain; its full sequence is D-ribose pyranase (139 aa).

Catalysis depends on His-20, which acts as the Proton donor. Substrate-binding positions include Asp-28, His-106, and 128–130; that span reads YAN.

Belongs to the RbsD / FucU family. RbsD subfamily. In terms of assembly, homodecamer.

The protein localises to the cytoplasm. The catalysed reaction is beta-D-ribopyranose = beta-D-ribofuranose. It participates in carbohydrate metabolism; D-ribose degradation; D-ribose 5-phosphate from beta-D-ribopyranose: step 1/2. Functionally, catalyzes the interconversion of beta-pyran and beta-furan forms of D-ribose. The sequence is that of D-ribose pyranase from Actinobacillus pleuropneumoniae serotype 5b (strain L20).